A 244-amino-acid chain; its full sequence is Bis(5'-nucleosyl)-tetraphosphatase PrpE [asymmetrical] (244 aa).

It belongs to the PrpE family. The cofactor is Ni(2+).

The protein localises to the forespore. The enzyme catalyses P(1),P(4)-bis(5'-guanosyl) tetraphosphate + H2O = GMP + GTP + 2 H(+). Its activity is regulated as follows. Inhibited by EDTA. Its function is as follows. Asymmetrically hydrolyzes Ap4p to yield AMP and ATP. Does not hydrolyze Ap2a or Ap6A. Also has an ATPase activity. Was shown to dephosphorylate phosphotyrosine but not phosphoserine or phosphothreonine from phosphorylated peptides. Involved in spore germination by controlling expression of genes coding for GerA and GerK receptors. This is Bis(5'-nucleosyl)-tetraphosphatase PrpE [asymmetrical] (prpE) from Bacillus subtilis (strain 168).